Reading from the N-terminus, the 410-residue chain is WD repeat and FYVE domain-containing protein 1 (410 aa).

WD repeat units lie at residues 22–61 (GHQD…QYWP), 66–105 (TMAS…NKMN), 112–150 (AHQN…NMLG), 153–192 (FFSS…CSVI), 197–236 (GHEG…GRTL), and 240–279 (GHHD…EEAP). The FYVE-type zinc finger occupies 281–352 (WLESDSCQKC…VCDSCYDSIK (72 aa)). Residues Cys-287, Cys-290, Cys-314, Cys-317, Cys-322, Cys-325, Cys-344, and Cys-347 each coordinate Zn(2+). Residues 364 to 403 (EGKHNISHMSMDIARGLMVTCGTDRVVKIWDMTPVVGCSL) form a WD 7 repeat. Ser-408 bears the Phosphoserine mark.

Binds PtdIns3P in vitro with high specificity over other phosphoinositides. Interacts (via WD repeat 2) with tyrosine-phosphorylated TLR3 (via TIR domain) in response to poly(I:C). Interacts with TLR4 in response to LPS. Interacts with TICAM1 in response to poly(I:C).

Its subcellular location is the early endosome. Its function is as follows. Positively regulates TLR3- and TLR4-mediated signaling pathways by bridging the interaction between TLR3 or TLR4 and TICAM1. Promotes TLR3/4 ligand-induced activation of transcription factors IRF3 and NF-kappa-B, as well as the production of IFN-beta and inflammatory cytokines. This is WD repeat and FYVE domain-containing protein 1 (Wdfy1) from Mus musculus (Mouse).